The sequence spans 366 residues: NADH-quinone oxidoreductase subunit D (366 aa).

This sequence belongs to the complex I 49 kDa subunit family. As to quaternary structure, NDH-1 is composed of 14 different subunits. Subunits NuoB, C, D, E, F, and G constitute the peripheral sector of the complex.

The protein resides in the cell membrane. It catalyses the reaction a quinone + NADH + 5 H(+)(in) = a quinol + NAD(+) + 4 H(+)(out). In terms of biological role, NDH-1 shuttles electrons from NADH, via FMN and iron-sulfur (Fe-S) centers, to quinones in the respiratory chain. The immediate electron acceptor for the enzyme in this species is believed to be a menaquinone. Couples the redox reaction to proton translocation (for every two electrons transferred, four hydrogen ions are translocated across the cytoplasmic membrane), and thus conserves the redox energy in a proton gradient. The polypeptide is NADH-quinone oxidoreductase subunit D (Bacillus thuringiensis subsp. konkukian (strain 97-27)).